Here is a 108-residue protein sequence, read N- to C-terminus: Protein S100-A15A (108 aa).

One can recognise an EF-hand domain in the interval 53–88 (KEPYYITELFQAADKNKDNQICFDEFLYILGKLVKD). Residues Asp-66, Asn-68, Asp-70, Gln-72, and Glu-77 each coordinate Ca(2+).

The protein belongs to the S-100 family.

The sequence is that of Protein S100-A15A (S100A15A) from Pongo abelii (Sumatran orangutan).